The sequence spans 93 residues: Small ribosomal subunit protein uS19 (93 aa).

The protein belongs to the universal ribosomal protein uS19 family.

Functionally, protein S19 forms a complex with S13 that binds strongly to the 16S ribosomal RNA. In Mycobacteroides abscessus (strain ATCC 19977 / DSM 44196 / CCUG 20993 / CIP 104536 / JCM 13569 / NCTC 13031 / TMC 1543 / L948) (Mycobacterium abscessus), this protein is Small ribosomal subunit protein uS19.